Here is a 259-residue protein sequence, read N- to C-terminus: Transmembrane protein 81 (259 aa).

An N-terminal signal peptide occupies residues 1-18 (MALSTLWLVLMLWTSLFS). Over 19 to 221 (DSQCSTLSQA…KVYSSSTIRN (203 aa)) the chain is Extracellular. The Ig-like domain maps to 97 to 172 (GRRLVLDCLE…VLDTGKRRVK (76 aa)). A disulfide bridge connects residues Cys104 and Cys161. Residues 222–242 (IVIISVPLSFAIAVVIFIFLF) traverse the membrane as a helical segment. The Cytoplasmic segment spans residues 243–259 (CYSRRARRAAHLCQDNI).

Forms a complex with izumo1 and spaca6 on spermatocyte cell membrane. The complex binds to oocyte protein bncr. In terms of tissue distribution, expressed in sperm.

It localises to the cell membrane. In terms of biological role, essential fertilization factor required for male fertility. Part of a conserved trimeric sperm complex with the essential fertilization factors IZUMO1 and SPACA6 which bridges sperm and oocyte membranes during fertilization by binding to IZUMO1R/JUNO on the oocyte. This chain is Transmembrane protein 81, found in Danio rerio (Zebrafish).